Reading from the N-terminus, the 326-residue chain is WD repeat-containing protein slr1409 (326 aa).

6 WD repeats span residues 47–77 (GSDVAINRIHFSPDGQFLLTAAADGVGTLWT), 88–118 (GQKPPMFNARLSPDRQILITTGYDGTIRLWN), 129–159 (PHRAAVADAIFSPDSQIIVTCSDDGQTKIFT), 169–199 (LKSGTARNLAYHPQGLLIASVSDSGSLHLIN), 210–240 (TGQGRINNVNFSPNGEQLLTSGINGSAKLWN), and 252–282 (VPTGWVNSAQFYPKGEWLATASDDGTIRFWQ).

The protein is WD repeat-containing protein slr1409 of Synechocystis sp. (strain ATCC 27184 / PCC 6803 / Kazusa).